A 232-amino-acid chain; its full sequence is Large ribosomal subunit protein uL1 (232 aa).

This sequence belongs to the universal ribosomal protein uL1 family. In terms of assembly, part of the 50S ribosomal subunit.

Binds directly to 23S rRNA. The L1 stalk is quite mobile in the ribosome, and is involved in E site tRNA release. In terms of biological role, protein L1 is also a translational repressor protein, it controls the translation of the L11 operon by binding to its mRNA. The chain is Large ribosomal subunit protein uL1 from Clostridium novyi (strain NT).